A 443-amino-acid polypeptide reads, in one-letter code: Sulfoquinovose isomerase (443 aa).

This sequence belongs to the SqvD family.

It carries out the reaction 6-sulfo-beta-D-quinovose = 6-deoxy-6-sulfo-D-fructose. Its function is as follows. Part of the sulfo-EMP2 pathway, a D-sulfoquinovose degradation pathway that produces sulfolactate (SL). Catalyzes the isomerization of sulfoquinovose (SQ) to 6-deoxy-6-sulfo-D-fructose (SF). This Alkalicoccus urumqiensis (Bacillus urumqiensis) protein is Sulfoquinovose isomerase.